A 463-amino-acid chain; its full sequence is Glutamate--tRNA ligase 2 (463 aa).

Residues 11 to 21 (PSPTGYLHIGG) carry the 'HIGH' region motif. The 'KMSKS' region motif lies at 240-244 (KLSKR). Lys-243 is a binding site for ATP.

The protein belongs to the class-I aminoacyl-tRNA synthetase family. Glutamate--tRNA ligase type 1 subfamily. Monomer.

Its subcellular location is the cytoplasm. It catalyses the reaction tRNA(Glu) + L-glutamate + ATP = L-glutamyl-tRNA(Glu) + AMP + diphosphate. Functionally, catalyzes the attachment of glutamate to tRNA(Glu) in a two-step reaction: glutamate is first activated by ATP to form Glu-AMP and then transferred to the acceptor end of tRNA(Glu). This Campylobacter jejuni subsp. jejuni serotype O:6 (strain 81116 / NCTC 11828) protein is Glutamate--tRNA ligase 2.